A 587-amino-acid chain; its full sequence is Putative gustatory receptor 59b (587 aa).

Over 1-4 the chain is Cytoplasmic; that stretch reads MPSY. A helical membrane pass occupies residues 5-25; sequence MAFTPYIMFSTNYAAIAYILI. At 26-62 the chain is on the extracellular side; it reads SRCYRDSMLLDLQRITLEVNREMLRTGKKMNSLIRRM. A helical membrane pass occupies residues 63 to 83; sequence FFLKTFTLTYSCLSYILAVLV. The Cytoplasmic segment spans residues 84 to 97; it reads YQWRAQNWSNLFNG. A helical membrane pass occupies residues 98–118; that stretch reads LLVNISLTILVVTTFFYFVSL. Over 119-277 the chain is Extracellular; it reads MHVARGFDFV…CGLYPVNKAK (159 aa). Asparagine 159 is a glycosylation site (N-linked (GlcNAc...) asparagine). Residues 278 to 298 traverse the membrane as a helical segment; that stretch reads WLEMVASIVVHSIMLFQFHLV. Over 299–309 the chain is Cytoplasmic; sequence MRGGYTTLFSR. Residues 310–330 form a helical membrane-spanning segment; it reads TYALLANIITLTMLPIVMWQV. Over 331 to 403 the chain is Extracellular; the sequence is RSVFLAKRHY…GIDGVRRSLR (73 aa). A helical transmembrane segment spans residues 404–424; sequence ILLFVKFFTLSWLCITDIIFL. The Cytoplasmic portion of the chain corresponds to 425-518; it reads FYSSDAVIWV…IYAPQMLATR (94 aa). Residues 519 to 539 traverse the membrane as a helical segment; it reads FDHFVIGVIQAYWGAVFTFDL. Residues 540-587 are Extracellular-facing; the sequence is STSFLWVVYGSVQYHVRSLDYYLIDYMCDVAVEYHDSARHSWSEKECY.

Belongs to the insect chemoreceptor superfamily. Gustatory receptor (GR) family. Gr22e subfamily.

It is found in the cell membrane. Its function is as follows. Probable gustatory receptor which mediates acceptance or avoidance behavior, depending on its substrates. This chain is Putative gustatory receptor 59b, found in Drosophila erecta (Fruit fly).